The sequence spans 1272 residues: AF4/FMR2 family member 2 (1272 aa).

Disordered stretches follow at residues 93–183 (IPKN…LTQD), 201–225 (QIGE…GEDA), and 283–302 (AYVR…PTLK). Residues 97–107 (SVPQNPNNKNE) show a composition bias toward polar residues. Residues 151 to 160 (SKPEWSRDSH) show a composition bias toward basic and acidic residues. Positions 161-183 (NPSTVLASQASGQPNKMQTLTQD) are enriched in polar residues. Ser-391 is subject to Phosphoserine. 4 disordered regions span residues 418 to 491 (KAKP…KWQL), 535 to 687 (TNAS…DQEE), 779 to 829 (SLHA…PEKK), and 842 to 903 (PPCI…QDKN). The segment covering 426–438 (VNPPLATPQPPPA) has biased composition (pro residues). Low complexity predominate over residues 439 to 452 (VQASGGSGSSSESE). At Thr-478 the chain carries Phosphothreonine. The span at 543 to 558 (EPKERPLLSLIREKAR) shows a compositional bias: basic and acidic residues. The segment covering 576 to 586 (STTSETVSQRT) has biased composition (polar residues). Positions 616–629 (PKEKESVELHDPPR) are enriched in basic and acidic residues. Residues 630-640 (GRNKATAHKPA) show a composition bias toward basic residues. The span at 818–829 (PTEVAEKIPEKK) shows a compositional bias: basic and acidic residues. 2 stretches are compositionally biased toward pro residues: residues 844 to 853 (CISPAPPHKP) and 874 to 883 (FPPPLSPLPE).

The protein belongs to the AF4 family.

It is found in the nucleus speckle. Functionally, RNA-binding protein. Might be involved in alternative splicing regulation through an interaction with G-quartet RNA structure. This Pan troglodytes (Chimpanzee) protein is AF4/FMR2 family member 2 (AFF2).